The sequence spans 177 residues: Peptidyl-tRNA hydrolase (177 aa).

Y12 provides a ligand contact to tRNA. Residue H17 is the Proton acceptor of the active site. 3 residues coordinate tRNA: F63, N65, and N111.

Belongs to the PTH family. As to quaternary structure, monomer.

It localises to the cytoplasm. It carries out the reaction an N-acyl-L-alpha-aminoacyl-tRNA + H2O = an N-acyl-L-amino acid + a tRNA + H(+). Functionally, hydrolyzes ribosome-free peptidyl-tRNAs (with 1 or more amino acids incorporated), which drop off the ribosome during protein synthesis, or as a result of ribosome stalling. In terms of biological role, catalyzes the release of premature peptidyl moieties from peptidyl-tRNA molecules trapped in stalled 50S ribosomal subunits, and thus maintains levels of free tRNAs and 50S ribosomes. The sequence is that of Peptidyl-tRNA hydrolase from Buchnera aphidicola subsp. Acyrthosiphon pisum (strain 5A).